The sequence spans 369 residues: Protein RecA (369 aa).

A compositionally biased stretch (basic and acidic residues) spans 1–10 (MARTTDDSKK). The segment at 1 to 20 (MARTTDDSKKAAPAAGTADE) is disordered. Residue 82–89 (GPESSGKT) coordinates ATP. A disordered region spans residues 350–369 (PAAAVAAPDEGDDDLGDEEV). A compositionally biased stretch (acidic residues) spans 358–369 (DEGDDDLGDEEV).

It belongs to the RecA family.

Its subcellular location is the cytoplasm. In terms of biological role, can catalyze the hydrolysis of ATP in the presence of single-stranded DNA, the ATP-dependent uptake of single-stranded DNA by duplex DNA, and the ATP-dependent hybridization of homologous single-stranded DNAs. It interacts with LexA causing its activation and leading to its autocatalytic cleavage. The protein is Protein RecA of Gloeobacter violaceus (strain ATCC 29082 / PCC 7421).